The sequence spans 180 residues: Crossover junction endodeoxyribonuclease RuvC (180 aa).

Catalysis depends on residues D13, E73, and D145. Mg(2+) contacts are provided by D13, E73, and D145.

The protein belongs to the RuvC family. Homodimer which binds Holliday junction (HJ) DNA. The HJ becomes 2-fold symmetrical on binding to RuvC with unstacked arms; it has a different conformation from HJ DNA in complex with RuvA. In the full resolvosome a probable DNA-RuvA(4)-RuvB(12)-RuvC(2) complex forms which resolves the HJ. Requires Mg(2+) as cofactor.

The protein localises to the cytoplasm. It catalyses the reaction Endonucleolytic cleavage at a junction such as a reciprocal single-stranded crossover between two homologous DNA duplexes (Holliday junction).. Functionally, the RuvA-RuvB-RuvC complex processes Holliday junction (HJ) DNA during genetic recombination and DNA repair. Endonuclease that resolves HJ intermediates. Cleaves cruciform DNA by making single-stranded nicks across the HJ at symmetrical positions within the homologous arms, yielding a 5'-phosphate and a 3'-hydroxyl group; requires a central core of homology in the junction. The consensus cleavage sequence is 5'-(A/T)TT(C/G)-3'. Cleavage occurs on the 3'-side of the TT dinucleotide at the point of strand exchange. HJ branch migration catalyzed by RuvA-RuvB allows RuvC to scan DNA until it finds its consensus sequence, where it cleaves and resolves the cruciform DNA. The chain is Crossover junction endodeoxyribonuclease RuvC from Magnetococcus marinus (strain ATCC BAA-1437 / JCM 17883 / MC-1).